We begin with the raw amino-acid sequence, 257 residues long: NAD-capped RNA hydrolase NudC (257 aa).

Substrate contacts are provided by Lys-25 and Arg-69. Cys-98 and Cys-101 together coordinate Zn(2+). Glu-111 contacts substrate. Zn(2+) contacts are provided by Cys-116 and Cys-119. Residue Tyr-124 participates in substrate binding. Residues Pro-125 to Thr-248 enclose the Nudix hydrolase domain. Ala-158, Glu-174, and Glu-178 together coordinate a divalent metal cation. Residues Gly-159–Gly-180 carry the Nudix box motif. Gln-192–Ser-199 serves as a coordination point for substrate. Glu-219 is a binding site for a divalent metal cation. Ala-241 provides a ligand contact to substrate.

Belongs to the Nudix hydrolase family. NudC subfamily. As to quaternary structure, homodimer. Mg(2+) serves as cofactor. Requires Mn(2+) as cofactor. It depends on Zn(2+) as a cofactor.

It catalyses the reaction a 5'-end NAD(+)-phospho-ribonucleoside in mRNA + H2O = a 5'-end phospho-adenosine-phospho-ribonucleoside in mRNA + beta-nicotinamide D-ribonucleotide + 2 H(+). It carries out the reaction NAD(+) + H2O = beta-nicotinamide D-ribonucleotide + AMP + 2 H(+). The enzyme catalyses NADH + H2O = reduced beta-nicotinamide D-ribonucleotide + AMP + 2 H(+). Its function is as follows. mRNA decapping enzyme that specifically removes the nicotinamide adenine dinucleotide (NAD) cap from a subset of mRNAs by hydrolyzing the diphosphate linkage to produce nicotinamide mononucleotide (NMN) and 5' monophosphate mRNA. The NAD-cap is present at the 5'-end of some mRNAs and stabilizes RNA against 5'-processing. Has preference for mRNAs with a 5'-end purine. Catalyzes the hydrolysis of a broad range of dinucleotide pyrophosphates. The sequence is that of NAD-capped RNA hydrolase NudC from Shigella dysenteriae serotype 1 (strain Sd197).